The primary structure comprises 92 residues: Large ribosomal subunit protein bL25 (92 aa).

It belongs to the bacterial ribosomal protein bL25 family. In terms of assembly, part of the 50S ribosomal subunit; part of the 5S rRNA/L5/L18/L25 subcomplex. Contacts the 5S rRNA. Binds to the 5S rRNA independently of L5 and L18.

Functionally, this is one of the proteins that binds to the 5S RNA in the ribosome where it forms part of the central protuberance. The chain is Large ribosomal subunit protein bL25 from Vibrio vulnificus (strain CMCP6).